The sequence spans 237 residues: MRFDIITLFPEFFASPLSSGLMAKALARGIAEVVLTNPRHFSTDKHQRVDDEPYGGGVGMVMKPEPLFAAVESLPALPRREVIYVTPQGQPLTQQHLWHWSRERDQLVILCGHYEGVDERVVEHLVTQEISIGDFVLTCGEIPALVILNGVLRLLPGTVGKAASLHQDSFEDGLLDYPHYTRPAEFRGWTVPPVLLSGHHGEIAAWRRAQQIERTRQRRPDLYARWLARTQGQAKTH.

Residues Gly-112 and 132 to 137 each bind S-adenosyl-L-methionine; that span reads IGDFVL.

This sequence belongs to the RNA methyltransferase TrmD family. Homodimer.

The protein resides in the cytoplasm. It catalyses the reaction guanosine(37) in tRNA + S-adenosyl-L-methionine = N(1)-methylguanosine(37) in tRNA + S-adenosyl-L-homocysteine + H(+). In terms of biological role, specifically methylates guanosine-37 in various tRNAs. The sequence is that of tRNA (guanine-N(1)-)-methyltransferase from Thermosynechococcus vestitus (strain NIES-2133 / IAM M-273 / BP-1).